We begin with the raw amino-acid sequence, 670 residues long: Tripeptidyl-peptidase SED1 (670 aa).

An N-terminal signal peptide occupies residues 1–20 (MSTMIFMYFIYIVLYASGIA). The propeptide at 21-231 (ANLSYHVHEK…VGLLKNKILS (211 aa)) is removed in mature form. The Peptidase S53 domain maps to 241–669 (LITPDCLRAL…DRMLDLFLQL (429 aa)). Catalysis depends on charge relay system residues Glu-318 and Asp-322. Residues Asn-334, Asn-387, Asn-488, Asn-508, and Asn-551 are each glycosylated (N-linked (GlcNAc...) asparagine). Residue Ser-586 is the Charge relay system of the active site. Ca(2+)-binding residues include Asp-627, Val-628, Gly-647, and Asp-649.

Requires Ca(2+) as cofactor.

It is found in the secreted. The protein resides in the extracellular space. It catalyses the reaction Release of an N-terminal tripeptide from a polypeptide.. In terms of biological role, secreted tripeptidyl-peptidase which degrades proteins at acidic pHs and is involved in virulence. This is Tripeptidyl-peptidase SED1 (SED1) from Arthroderma otae (strain ATCC MYA-4605 / CBS 113480) (Microsporum canis).